Reading from the N-terminus, the 236-residue chain is tRNA (guanine-N(7)-)-methyltransferase (236 aa).

Residues E43, D68, N102, and N125 each contribute to the S-adenosyl-L-methionine site. 2 residues coordinate substrate: K129 and D161.

This sequence belongs to the class I-like SAM-binding methyltransferase superfamily. TrmB family.

The enzyme catalyses guanosine(46) in tRNA + S-adenosyl-L-methionine = N(7)-methylguanosine(46) in tRNA + S-adenosyl-L-homocysteine. It participates in tRNA modification; N(7)-methylguanine-tRNA biosynthesis. Functionally, catalyzes the formation of N(7)-methylguanine at position 46 (m7G46) in tRNA. The chain is tRNA (guanine-N(7)-)-methyltransferase from Ruminiclostridium cellulolyticum (strain ATCC 35319 / DSM 5812 / JCM 6584 / H10) (Clostridium cellulolyticum).